Reading from the N-terminus, the 552-residue chain is Phosphoglucomutase (552 aa).

The Phosphoserine intermediate role is filled by S143. Residues S143, D295, D297, and D299 each coordinate Mg(2+).

This sequence belongs to the phosphohexose mutase family. Mg(2+) is required as a cofactor.

The enzyme catalyses alpha-D-glucose 1-phosphate = alpha-D-glucose 6-phosphate. It participates in glycolipid metabolism; diglucosyl-diacylglycerol biosynthesis. Catalyzes the interconversion between glucose-6-phosphate and alpha-glucose-1-phosphate. This is the first step in the biosynthesis of diglucosyl-diacylglycerol (Glc2-DAG), i.e. the predominant glycolipid found in the S.aureus membrane, which is also used as a membrane anchor for lipoteichoic acid (LTA). The polypeptide is Phosphoglucomutase (pgcA) (Staphylococcus aureus (strain USA300)).